Here is a 218-residue protein sequence, read N- to C-terminus: Glutathione S-transferase-like protein OpS6 (218 aa).

Positions 5 to 86 (QPIKLYAHKK…YLIEQYDKDG (82 aa)) constitute a GST N-terminal domain. A GST C-terminal domain is found at 92-218 (SLQDKSLARA…KIAATKAALA (127 aa)).

The protein belongs to the GST superfamily.

It functions in the pathway secondary metabolite biosynthesis. In terms of biological role, glutathione S-transferase-like protein; part of the gene cluster that mediates the biosynthesis of the bibenzoquinone oosporein, a metabolite required for fungal virulence that acts by evading host immunity to facilitate fungal multiplication in insects. The non-reducing polyketide synthase OpS1 produces orsellinic acid by condensing acetyl-CoA with 3 malonyl-CoA units. Orsellinic acid is then hydroxylated to benzenetriol by the hydroxylase OpS4. The intermediate is oxidized either nonenzymatically to 5,5'-dideoxy-oosporein or enzymatically to benzenetetrol by the oxidoreductase OpS7. The latter is further dimerized to oosporein by the catalase OpS5. OpS6 probably functions en route for protecting cells against oxidative stress by scavenging any leaked free radical form of benzenetetrol by activating the thiol group of glutathione. The chain is Glutathione S-transferase-like protein OpS6 from Beauveria bassiana (strain ARSEF 2860) (White muscardine disease fungus).